A 394-amino-acid polypeptide reads, in one-letter code: Phosphoglycerate kinase (394 aa).

Residues 21 to 23, arginine 36, 59 to 62, arginine 118, and arginine 151 each bind substrate; these read DFN and HLGR. Serine 183 is subject to Phosphoserine. The ATP site is built by lysine 201 and glycine 292. At threonine 299 the chain carries Phosphothreonine. ATP is bound by residues glutamate 323 and 350 to 353; that span reads GGDS.

The protein belongs to the phosphoglycerate kinase family. In terms of assembly, monomer.

Its subcellular location is the cytoplasm. It carries out the reaction (2R)-3-phosphoglycerate + ATP = (2R)-3-phospho-glyceroyl phosphate + ADP. Its pathway is carbohydrate degradation; glycolysis; pyruvate from D-glyceraldehyde 3-phosphate: step 2/5. This chain is Phosphoglycerate kinase, found in Bacillus cereus (strain ATCC 10987 / NRS 248).